We begin with the raw amino-acid sequence, 349 residues long: Anthranilate phosphoribosyltransferase (349 aa).

5-phospho-alpha-D-ribose 1-diphosphate contacts are provided by residues glycine 82, 85 to 86, 92 to 95, 110 to 118, and serine 122; these read GD, NVST, and KHGNRAVSG. Position 82 (glycine 82) interacts with anthranilate. Serine 94 contributes to the Mg(2+) binding site. Asparagine 113 serves as a coordination point for anthranilate. Anthranilate is bound at residue arginine 168. Positions 227 and 228 each coordinate Mg(2+).

Belongs to the anthranilate phosphoribosyltransferase family. As to quaternary structure, homodimer. Requires Mg(2+) as cofactor.

It carries out the reaction N-(5-phospho-beta-D-ribosyl)anthranilate + diphosphate = 5-phospho-alpha-D-ribose 1-diphosphate + anthranilate. It participates in amino-acid biosynthesis; L-tryptophan biosynthesis; L-tryptophan from chorismate: step 2/5. Its function is as follows. Catalyzes the transfer of the phosphoribosyl group of 5-phosphorylribose-1-pyrophosphate (PRPP) to anthranilate to yield N-(5'-phosphoribosyl)-anthranilate (PRA). This is Anthranilate phosphoribosyltransferase from Pseudomonas fluorescens (strain ATCC BAA-477 / NRRL B-23932 / Pf-5).